The chain runs to 493 residues: Malonyl-CoA decarboxylase, mitochondrial (493 aa).

The N-terminal 39 residues, 1 to 39 (MRGFGPGLTARRLLPLRLPPRPPGPRLASGQAAGALERA), are a transit peptide targeting the mitochondrion. The interval 40–190 (MDELLRRAVP…VLKGMLSEWF (151 aa)) is alpha-helical domain. The residue at position 59 (K59) is an N6-acetyllysine. An N6-acetyllysine; alternate modification is found at K168. K168 is subject to N6-succinyllysine; alternate. Positions 191–493 (SSGFLNLERV…VAQFQKNSKL (303 aa)) are catalytic domain. At K211 the chain carries N6-acetyllysine. Position 222 is an N6-succinyllysine (K222). Malonyl-CoA is bound by residues 299-305 (QGVELGT) and S329. S329 acts as the Proton acceptor in catalysis. At K389 the chain carries N6-acetyllysine. H423 contributes to the malonyl-CoA binding site. Residue H423 is the Proton donor of the active site. Position 472 is an N6-acetyllysine (K472). Residues 491 to 493 (SKL) carry the Microbody targeting signal motif.

Homotetramer. Dimer of dimers. The two subunits within a dimer display conformational differences suggesting that at any given moment, only one of the two subunits is competent for malonyl-CoA binding and catalytic activity. Under oxidizing conditions, can form disulfide-linked homotetramers (in vitro). Associates with the peroxisomal targeting signal receptor PEX5. Post-translationally, acetylation at Lys-472 activates malonyl-CoA decarboxylase activity. Deacetylation at Lys-472 by SIRT4 represses activity, leading to promote lipogenesis. Interchain disulfide bonds may form in peroxisomes (Potential). Interchain disulfide bonds are not expected to form in the reducing environment of the cytoplasm and mitochondria. As to expression, expressed in fibroblasts and hepatoblastoma cells (at protein level). Expressed strongly in heart, liver, skeletal muscle, kidney and pancreas. Expressed in myotubes. Expressed weakly in brain, placenta, spleen, thymus, testis, ovary and small intestine.

It is found in the cytoplasm. The protein localises to the mitochondrion matrix. It localises to the peroxisome. The protein resides in the peroxisome matrix. It carries out the reaction malonyl-CoA + H(+) = acetyl-CoA + CO2. It functions in the pathway metabolic intermediate biosynthesis; acetyl-CoA biosynthesis; acetyl-CoA from malonyl-CoA: step 1/1. With respect to regulation, malonyl-CoA decarboxylase activity does not require any cofactors or divalent metal ions. Formation of interchain disulfide bonds leads to positive cooperativity between active sites and increases the affinity for malonyl-CoA and the catalytic efficiency (in vitro). Catalyzes the conversion of malonyl-CoA to acetyl-CoA. In the fatty acid biosynthesis MCD selectively removes malonyl-CoA and thus assures that methyl-malonyl-CoA is the only chain elongating substrate for fatty acid synthase and that fatty acids with multiple methyl side chains are produced. In peroxisomes it may be involved in degrading intraperoxisomal malonyl-CoA, which is generated by the peroxisomal beta-oxidation of odd chain-length dicarboxylic fatty acids. Plays a role in the metabolic balance between glucose and lipid oxidation in muscle independent of alterations in insulin signaling. May play a role in controlling the extent of ischemic injury by promoting glucose oxidation. This chain is Malonyl-CoA decarboxylase, mitochondrial, found in Homo sapiens (Human).